Here is a 58-residue protein sequence, read N- to C-terminus: ATP synthase F(0) complex subunit k, mitochondrial (58 aa).

Lys16 and Lys17 each carry N6-acetyllysine. The chain crosses the membrane as a helical span at residues 23–45 (TLTGRMNCVLATYGGIALLVLYF).

As to quaternary structure, component of the ATP synthase complex composed at least of ATP5F1A/subunit alpha, ATP5F1B/subunit beta, ATP5MC1/subunit c (homooctomer), MT-ATP6/subunit a, MT-ATP8/subunit 8, ATP5ME/subunit e, ATP5MF/subunit f, ATP5MG/subunit g, ATP5MK/subunit k, ATP5MJ/subunit j, ATP5F1C/subunit gamma, ATP5F1D/subunit delta, ATP5F1E/subunit epsilon, ATP5PF/subunit F6, ATP5PB/subunit b, ATP5PD/subunit d, ATP5PO/subunit OSCP. ATP synthase complex consists of a soluble F(1) head domain (subunits alpha(3) and beta(3)) - the catalytic core - and a membrane F(0) domain - the membrane proton channel (subunits c, a, 8, e, f, g, k and j). These two domains are linked by a central stalk (subunits gamma, delta, and epsilon) rotating inside the F1 region and a stationary peripheral stalk (subunits F6, b, d, and OSCP). The ATP synthase complex/complex V exists as a monomeric and a dimeric supercomplex that helps shape mitochondrial cristae to optimize proton flow. In terms of tissue distribution, ubiquitous. Highly expressed in skeletal and cardiac muscle. Moderately expressed in brain, thymus, stomach and testis. Lowest expression levels were detected in lung, liver, kidney, adrenal gland, spleen, small intestine and adipose tissue. In streptozotocin-induced diabetes, the insulin-sensitive tissues skeletal and cardiac muscle were down-regulated.

The protein localises to the mitochondrion membrane. Subunit k, of the mitochondrial membrane ATP synthase complex (F(1)F(0) ATP synthase or Complex V) that produces ATP from ADP in the presence of a proton gradient across the membrane which is generated by electron transport complexes of the respiratory chain. ATP synthase complex consist of a soluble F(1) head domain - the catalytic core - and a membrane F(1) domain - the membrane proton channel. These two domains are linked by a central stalk rotating inside the F(1) region and a stationary peripheral stalk. During catalysis, ATP synthesis in the catalytic domain of F(1) is coupled via a rotary mechanism of the central stalk subunits to proton translocation. In vivo, can only synthesize ATP although its ATP hydrolase activity can be activated artificially in vitro. Part of the complex F(0) domain. Required for dimerization of the ATP synthase complex and as such regulates ATP synthesis in the mitochondria. The protein is ATP synthase F(0) complex subunit k, mitochondrial (Atp5mk) of Rattus norvegicus (Rat).